The primary structure comprises 876 residues: MKTAELRQAFLEYFQQQGHAIVPSSSLVPHDDPTLLFTNAGMNQFKDLFLGREERDYTRATSSQKCVRAGGKHNDLENVGYTARHHTFFEMLGNFSFGDYFKREAINFAWTFLTGEQHLNLPQEKLWVTVYAEDDEAFDIWNQEIGVPAERIVRIGDNKGARYASDNFWQMGDTGPCGPCTEIFFDHGPDVAGGPPGSPEEDGDRYIEIWNVVFMQYNRTADGEMLNLPKPSVDTGMGLERIAAVLQGVHSNYEIDLFQDLLKAASDILGGAATTEASLRVVADHIRSCAFLIADGVMPSNEGRGFVLRRIIRRAARHGNKLGATQPFFYKLTGALVELMGEAYPQLVSSRKQIEKVLLQEEEQFAKTLDKGLRLLEQDIAELKGTEIPGETVFTLYDTYGFPVDLTNDIARERGLTLDYEGYEKAMEAQRDRARAASKFGIDYNAAGITIEGKTEFTGYDHVDGHERIRTVLVNGEERNAEAGDECVVVLERTPFYAESGGQVGDTGLLTWSGGRFQVTDTRKEGDNHLHVGTLIEGELFPGLEVDARIDHARRERTKRNHSATHLLHAALRNILGEHVTQKGSLVDPDKLRFDFSHFEAVTPEQLREIERTVNEQILENTPVDIDITDMDTAKEKGAMALFGEKYGDVVRVLTMGTDKYSVELCGGTHVARTGDIGLFRITSESGISSGVRRIEAVTGLGALEWVDETERTLRETARLVKGTRDSVVDKVKQVLDRNRQLEKDVDALKAKLASSAGTDLAGSAVEVAGLKVVASEMEGADRKALMETADQLKNKLGEGVVVLATVEDGKVVLVAGVTKSATNRIKAGDLMKHLASLVDGKGGGRPDMAQGGGNDPSRLAEALAGVPAWVEQNIG.

His562, His566, Cys666, and His670 together coordinate Zn(2+).

It belongs to the class-II aminoacyl-tRNA synthetase family. Requires Zn(2+) as cofactor.

Its subcellular location is the cytoplasm. It carries out the reaction tRNA(Ala) + L-alanine + ATP = L-alanyl-tRNA(Ala) + AMP + diphosphate. Its function is as follows. Catalyzes the attachment of alanine to tRNA(Ala) in a two-step reaction: alanine is first activated by ATP to form Ala-AMP and then transferred to the acceptor end of tRNA(Ala). Also edits incorrectly charged Ser-tRNA(Ala) and Gly-tRNA(Ala) via its editing domain. The protein is Alanine--tRNA ligase of Marinobacter nauticus (strain ATCC 700491 / DSM 11845 / VT8) (Marinobacter aquaeolei).